Reading from the N-terminus, the 545-residue chain is Dual specificity calcium/calmodulin-dependent 3',5'-cyclic nucleotide phosphodiesterase 1A (545 aa).

Calmodulin-binding regions lie at residues Thr24–Lys44 and Glu114–Lys137. The PDEase domain occupies Val142 to Gly522. His219 functions as the Proton donor in the catalytic mechanism. Zn(2+) is bound by residues His223, His259, Asp260, and Asp366. Position 260 (Asp260) interacts with Mg(2+). The segment at Leu526–Pro545 is disordered.

The protein belongs to the cyclic nucleotide phosphodiesterase family. PDE1 subfamily. In terms of assembly, homodimer. Interacts with YWHAZ. Zn(2+) serves as cofactor. The cofactor is Mg(2+). In terms of tissue distribution, expressed in brain, kidney and testis.

Its subcellular location is the cell projection. It localises to the cilium. The protein localises to the flagellum. It carries out the reaction a nucleoside 3',5'-cyclic phosphate + H2O = a nucleoside 5'-phosphate + H(+). The catalysed reaction is 3',5'-cyclic GMP + H2O = GMP + H(+). The enzyme catalyses 3',5'-cyclic AMP + H2O = AMP + H(+). Type I PDE are activated by the binding of calmodulin in the presence of Ca(2+). Its activity is regulated as follows. Activated by the binding of calmodulin in the presence of Ca(2+). In terms of biological role, calcium/calmodulin-dependent cyclic nucleotide phosphodiesterase with a dual specificity for the second messengers cGMP and cAMP, which are key regulators of many important physiological processes. Has a higher efficiency with cGMP compared to cAMP. The sequence is that of Dual specificity calcium/calmodulin-dependent 3',5'-cyclic nucleotide phosphodiesterase 1A from Mus musculus (Mouse).